A 442-amino-acid polypeptide reads, in one-letter code: D(2) dopamine receptor A (442 aa).

At 1–31 the chain is on the extracellular side; that stretch reads MDPQNLSMYNDDINNGTNGTAVDQKPHYNYY. N-linked (GlcNAc...) asparagine glycans are attached at residues Asn-5, Asn-15, and Asn-18. Residues 32-54 form a helical membrane-spanning segment; it reads AMLLTLLVFVIVFGNVLVCIAVS. Topologically, residues 55-64 are cytoplasmic; that stretch reads REKALQTTTN. The helical transmembrane segment at 65–87 threads the bilayer; sequence YLIVSLAVADLLVATLVMPWAVY. At 88–102 the chain is on the extracellular side; sequence MEVVGEWRFSRIHCD. Cysteines 101 and 176 form a disulfide. The chain crosses the membrane as a helical span at residues 103-124; sequence IFVTLDVMMCTASILNLCAISI. The Cytoplasmic segment spans residues 125 to 145; sequence DRYTAVAMPMLYNTRYSSKRR. Residues 146–166 form a helical membrane-spanning segment; it reads VTVMISVVWVLSFAISCPLLF. The Extracellular portion of the chain corresponds to 167–182; the sequence is GLNNTGSKVCIIDNPA. Residues 183–207 traverse the membrane as a helical segment; the sequence is FVIYSSIVSFYVPFIVTLLVYVQIY. Residues 208-372 lie on the Cytoplasmic side of the membrane; it reads IVLRKRRKRV…SQHKEKKATQ (165 aa). The interval 273–335 is disordered; it reads DMEMEMMSST…KNGHPKDSTK (63 aa). Residues 304-318 are compositionally biased toward polar residues; that stretch reads ATSNQCKNASLTSPV. Basic and acidic residues predominate over residues 322-335; the sequence is YKAEKNGHPKDSTK. A helical transmembrane segment spans residues 373–394; the sequence is MLAIVLGVFIICWLPFFIIHIL. Over 395–408 the chain is Extracellular; it reads NMHCNCNIPQALYS. A disulfide bridge links Cys-398 with Cys-400. The helical transmembrane segment at 409–430 threads the bilayer; the sequence is AFTWLGYVNSAVNPIIYTTFNV. Residues 431-442 are Cytoplasmic-facing; it reads EFRKAFIKILHC. Cys-442 carries S-palmitoyl cysteine lipidation.

Belongs to the G-protein coupled receptor 1 family. Palmitoylated. Palmitoylation is probably required for proper localization to the plasma membrane and stability of the receptor. In terms of tissue distribution, brain; pituitary.

Its subcellular location is the cell membrane. It is found in the golgi apparatus membrane. This is one of the five types (D1 to D5) of receptors for dopamine. The activity of this receptor is mediated by G proteins which inhibits adenylyl cyclase. In Xenopus D2R is involved in the regulation of the melanotrope cells of the intermediate pituitary during background adaptation of the animal. The chain is D(2) dopamine receptor A (drd2-a) from Xenopus laevis (African clawed frog).